We begin with the raw amino-acid sequence, 228 residues long: RNA pyrophosphohydrolase (228 aa).

Residues 1–70 (MEKRSGIGRL…KQWVKMMNDI (70 aa)) form a unknown region. Positions 71–228 (VIDKRGFRLG…VLTEFAEFIR (158 aa)) are rppH domain. The 146-residue stretch at 76–221 (GFRLGVGMVI…KRDVYQKVLT (146 aa)) folds into the Nudix hydrolase domain. The Nudix box signature appears at 109 to 130 (GGLLPNETLREALNRELDEEVG).

It in the C-terminal section; belongs to the Nudix hydrolase family. RppH subfamily. The cofactor is a divalent metal cation.

Its function is as follows. Accelerates the degradation of transcripts by removing pyrophosphate from the 5'-end of triphosphorylated RNA, leading to a more labile monophosphorylated state that can stimulate subsequent ribonuclease cleavage. In Coxiella burnetii (strain RSA 493 / Nine Mile phase I), this protein is RNA pyrophosphohydrolase.